The sequence spans 74 residues: Large ribosomal subunit protein bL31 (74 aa).

Cys16, Cys18, Cys38, and Cys41 together coordinate Zn(2+).

It belongs to the bacterial ribosomal protein bL31 family. Type A subfamily. In terms of assembly, part of the 50S ribosomal subunit. Zn(2+) serves as cofactor.

In terms of biological role, binds the 23S rRNA. The chain is Large ribosomal subunit protein bL31 from Salinispora arenicola (strain CNS-205).